A 259-amino-acid polypeptide reads, in one-letter code: Ubiquinone/menaquinone biosynthesis C-methyltransferase UbiE (259 aa).

Residues Thr-82, Asp-103, 131–132 (NA), and Ser-148 contribute to the S-adenosyl-L-methionine site.

Belongs to the class I-like SAM-binding methyltransferase superfamily. MenG/UbiE family.

It carries out the reaction a 2-demethylmenaquinol + S-adenosyl-L-methionine = a menaquinol + S-adenosyl-L-homocysteine + H(+). The enzyme catalyses a 2-methoxy-6-(all-trans-polyprenyl)benzene-1,4-diol + S-adenosyl-L-methionine = a 5-methoxy-2-methyl-3-(all-trans-polyprenyl)benzene-1,4-diol + S-adenosyl-L-homocysteine + H(+). It functions in the pathway quinol/quinone metabolism; menaquinone biosynthesis; menaquinol from 1,4-dihydroxy-2-naphthoate: step 2/2. Its pathway is cofactor biosynthesis; ubiquinone biosynthesis. Its function is as follows. Methyltransferase required for the conversion of demethylmenaquinol (DMKH2) to menaquinol (MKH2) and the conversion of 2-polyprenyl-6-methoxy-1,4-benzoquinol (DDMQH2) to 2-polyprenyl-3-methyl-6-methoxy-1,4-benzoquinol (DMQH2). This Haemophilus ducreyi (strain 35000HP / ATCC 700724) protein is Ubiquinone/menaquinone biosynthesis C-methyltransferase UbiE.